A 393-amino-acid polypeptide reads, in one-letter code: Bifunctional chrysanthemol synthase, chloroplastic (393 aa).

Low complexity predominate over residues 1 to 18; it reads MACSSSLSSKWASWGASS. The disordered stretch occupies residues 1-22; the sequence is MACSSSLSSKWASWGASSRPHP. Residues 1-53 constitute a chloroplast transit peptide; that stretch reads MACSSSLSSKWASWGASSRPHPSVQPFVTRKNVVRYHKPTSELSYSPLTTTLS. 3 residues coordinate dimethylallyl diphosphate: Lys-99, Arg-102, and Gln-137. Residues Asp-144 and Asp-148 each coordinate Mg(2+). Dimethylallyl diphosphate contacts are provided by Arg-153, Arg-154, Lys-241, Gln-280, Asp-287, Lys-297, and Lys-306.

This sequence belongs to the FPP/GGPP synthase family. Requires Mg(2+) as cofactor. Restricted to glandular trichomes during achene maturation. Expressed in flowers and in both ray and disk florets.

The protein resides in the plastid. It localises to the chloroplast. The catalysed reaction is 2 dimethylallyl diphosphate = (R,R)-chrysanthemyl diphosphate + diphosphate. It carries out the reaction (R,R)-chrysanthemyl diphosphate + H2O = (R,R)-chrysanthemol + diphosphate. It catalyses the reaction (R)-lavandulyl diphosphate + H2O = (R)-lavandulol + diphosphate. It functions in the pathway isoprenoid biosynthesis. Its function is as follows. Component of the monoterpenoid pyrethrins biosynthesis; pyrethrins are widely used plant-derived pesticide. Catalyzes the condensation of two molecules of dimethylallyl diphosphate to produce chrysanthemyl diphosphate (CPP), a monoterpene with a non-head-to-tail or irregular c1'-2-3 linkage between isoprenoid units. In a second step, hydrolyzes the diphosphate moiety of CPP to form chrysanthemol. With a lower efficiency, can also converts dimethylallyl diphosphate into lavandulyl diphosphate (LPP), and subsequently LPP into lavandulol. This is Bifunctional chrysanthemol synthase, chloroplastic from Tanacetum cinerariifolium (Dalmatian daisy).